Consider the following 104-residue polypeptide: MGERTTSLLGKQQTYDPEARILIGTNSKIGTGFDHPKLDTLLAAADMVSYYIQFIGRIMRRKDVEPIIFDLVDSHPILRQHWIKRKKVYENHGGEIIKYNPRQE.

This is an uncharacterized protein from Invertebrate iridescent virus 3 (IIV-3).